Reading from the N-terminus, the 267-residue chain is Glutamate racemase (267 aa).

Substrate contacts are provided by residues 9–10 (DS) and 41–42 (YS). The Proton donor/acceptor role is filled by Cys73. Residue 74–75 (NT) coordinates substrate. Cys184 functions as the Proton donor/acceptor in the catalytic mechanism. A substrate-binding site is contributed by 185 to 186 (TH).

It belongs to the aspartate/glutamate racemases family.

It carries out the reaction L-glutamate = D-glutamate. It functions in the pathway cell wall biogenesis; peptidoglycan biosynthesis. Its function is as follows. Provides the (R)-glutamate required for cell wall biosynthesis. The polypeptide is Glutamate racemase (Glaesserella parasuis serovar 5 (strain SH0165) (Haemophilus parasuis)).